Here is a 363-residue protein sequence, read N- to C-terminus: NAD(P)H-quinone oxidoreductase subunit 1, chloroplastic (363 aa).

A run of 7 helical transmembrane segments spans residues 30-50 (LVPI…IVWL), 98-118 (FSIG…VIPF), 129-149 (VGVF…LMSG), 165-185 (AAQS…ISLL), 253-273 (FAFF…FVTI), 303-323 (TTTE…ISIT), and 336-356 (LLNL…LLTT).

It belongs to the complex I subunit 1 family. In terms of assembly, NDH is composed of at least 16 different subunits, 5 of which are encoded in the nucleus.

The protein localises to the plastid. It is found in the chloroplast thylakoid membrane. It carries out the reaction a plastoquinone + NADH + (n+1) H(+)(in) = a plastoquinol + NAD(+) + n H(+)(out). The catalysed reaction is a plastoquinone + NADPH + (n+1) H(+)(in) = a plastoquinol + NADP(+) + n H(+)(out). In terms of biological role, NDH shuttles electrons from NAD(P)H:plastoquinone, via FMN and iron-sulfur (Fe-S) centers, to quinones in the photosynthetic chain and possibly in a chloroplast respiratory chain. The immediate electron acceptor for the enzyme in this species is believed to be plastoquinone. Couples the redox reaction to proton translocation, and thus conserves the redox energy in a proton gradient. The sequence is that of NAD(P)H-quinone oxidoreductase subunit 1, chloroplastic from Pelargonium hortorum (Common geranium).